We begin with the raw amino-acid sequence, 213 residues long: Large ribosomal subunit protein uL23 (213 aa).

The interval Met-1–Glu-117 is large ribosomal subunit protein uL23. Residues Lys-118–Val-213 are unknown.

Belongs to the universal ribosomal protein uL23 family. In terms of assembly, part of the 50S ribosomal subunit. Contacts protein L29, and trigger factor when it is bound to the ribosome.

Functionally, one of the early assembly proteins it binds 23S rRNA. One of the proteins that surrounds the polypeptide exit tunnel on the outside of the ribosome. Forms the main docking site for trigger factor binding to the ribosome. The chain is Large ribosomal subunit protein uL23 from Mycoplasma mobile (strain ATCC 43663 / 163K / NCTC 11711) (Mesomycoplasma mobile).